The primary structure comprises 328 residues: Phenylalanine--tRNA ligase alpha subunit (328 aa).

Glutamate 253 is a binding site for Mg(2+).

It belongs to the class-II aminoacyl-tRNA synthetase family. Phe-tRNA synthetase alpha subunit type 1 subfamily. In terms of assembly, tetramer of two alpha and two beta subunits. Mg(2+) is required as a cofactor.

The protein localises to the cytoplasm. It catalyses the reaction tRNA(Phe) + L-phenylalanine + ATP = L-phenylalanyl-tRNA(Phe) + AMP + diphosphate + H(+). The polypeptide is Phenylalanine--tRNA ligase alpha subunit (Coxiella burnetii (strain CbuG_Q212) (Coxiella burnetii (strain Q212))).